We begin with the raw amino-acid sequence, 469 residues long: GTPase Der (469 aa).

EngA-type G domains follow at residues 3–166 (PVIA…PEDE) and 177–350 (LRLA…ESAN). GTP is bound by residues 9–16 (GRPNVGKS), 56–60 (DTGGI), 118–121 (NKVD), 183–190 (GRPNVGKS), 230–234 (DTAGV), and 295–298 (NKWD). The 85-residue stretch at 351 to 435 (LKVSPAKLTQ…PVKIEFKTSE (85 aa)) folds into the KH-like domain.

The protein belongs to the TRAFAC class TrmE-Era-EngA-EngB-Septin-like GTPase superfamily. EngA (Der) GTPase family. In terms of assembly, associates with the 50S ribosomal subunit.

GTPase that plays an essential role in the late steps of ribosome biogenesis. This Acinetobacter baumannii (strain AB0057) protein is GTPase Der.